A 423-amino-acid chain; its full sequence is Osteomodulin (423 aa).

Positions 1–20 (MGFLSPIYVLFFCFGVRVYC) are cleaved as a signal peptide. Sulfotyrosine occurs at positions 22, 25, 31, 39, 51, and 77. Residues 53–91 (VPFYNNILGCAKECFCPTNFPTSMYCDNRKLKTIPIIPM) enclose the LRRNT domain. LRR repeat units lie at residues 92 to 113 (HIQQLNLQFNDIEAVTANSFIN), 116 to 129 (HLKEINLSHNKIKS), 142 to 164 (NLQQLHLEHNNLEEFPFPLPKSL), 165 to 184 (ERLLLGYNEISILPTNAMDG), 187 to 207 (NVTMLDLCYNHLSDSMLKEKT), 213 to 233 (KLMQLNLCNNRLESMPLGLPS), 234 to 255 (SLMYLSLENNSISSIPDNYFDK), 258 to 279 (KLHALRISHNKLEDIPYDIFNL), 281 to 294 (NLIELNVGHNKLKQ), 301 to 322 (NLEHLYLQNNEIESINVTMICP), and 331 to 353 (HLTYLRVDQNKLKEPISSYIFFC). Residues asparagine 113 and asparagine 121 are each glycosylated (N-linked (GlcNAc...) asparagine). A glycan (N-linked (GlcNAc...) asparagine) is linked at asparagine 187. Residues asparagine 242 and asparagine 278 are each glycosylated (N-linked (GlcNAc...) asparagine). The N-linked (GlcNAc...) asparagine glycan is linked to asparagine 316. Cysteine 321 and cysteine 353 are disulfide-bonded. The segment at 381-406 (RSYQEEEEEDDHDSQDNTLEGQEVSD) is disordered. Sulfotyrosine occurs at positions 413 and 414.

It belongs to the small leucine-rich proteoglycan (SLRP) family. SLRP class II subfamily. In terms of assembly, binds the alpha(V)beta(3)-integrin. Post-translationally, glycosylated; contains keratan sulfate. In terms of tissue distribution, bone specific.

The protein resides in the secreted. The protein localises to the extracellular space. Its subcellular location is the extracellular matrix. Functionally, may be implicated in biomineralization processes. Has a function in binding of osteoblasts via the alpha(V)beta(3)-integrin. The protein is Osteomodulin (Omd) of Mus musculus (Mouse).